Reading from the N-terminus, the 694-residue chain is Heat shock protein HSP 90-alpha (694 aa).

Phosphothreonine; by PRKDC is present on residues Thr-5 and Thr-7. An interaction with NR3C1 region spans residues 9 to 236 (DQPMEEEEVE…DKEVSDDEAK (228 aa)). Asn-51 contributes to the ATP binding site. Lys-58 and Lys-84 each carry N6-acetyllysine. Residues Asp-93, Lys-112, and Phe-138 each contribute to the ATP site. Residues 228–241 (KEVSDDEAKQPDDK) show a composition bias toward basic and acidic residues. The segment at 228 to 275 (KEVSDDEAKQPDDKPEIEDVGSDEEEEEKKDGDIDQEELNKTKPIWTR) is disordered. Ser-231 and Ser-249 each carry phosphoserine. Positions 242-255 (PEIEDVGSDEEEEE) are enriched in acidic residues. The segment covering 256-268 (KKDGDIDQEELNK) has biased composition (basic and acidic residues). The tract at residues 258-578 (DGDIDQEELN…TANMERIMKA (321 aa)) is interaction with NR3C1. Residues 261–582 (IDQEELNKTK…ERIMKAQALR (322 aa)) form an interaction with FNIP2 and TSC1 region. The interaction with FLCN and FNIP1 stretch occupies residues 261–694 (IDQEELNKTK…DDTSRMEEVD (434 aa)). A Phosphotyrosine modification is found at Tyr-289. Arg-376 contacts ATP. The residue at position 419 (Lys-419) is an N6-acetyllysine. Residue Ser-429 is modified to Phosphoserine. The residue at position 434 (Lys-434) is an N6-acetyllysine. A Phosphoserine modification is found at Ser-452. Lys-465 carries the post-translational modification N6-acetyllysine. A Phosphotyrosine modification is found at Tyr-468. Lys-547 is modified (N6-acetyllysine). At Cys-560 the chain carries S-nitrosocysteine. The interval 590–693 (MAAKKHLEVN…DDDTSRMEEV (104 aa)) is interaction with NR1D1. Ser-603 carries the post-translational modification Phosphoserine. The required for homodimerization stretch occupies residues 644–694 (QTHANRIYRMIKLGLGIDEDDPTADDTAAAVTEEMPPLEGDDDTSRMEEVD). The interval 662–694 (EDDPTADDTAAAVTEEMPPLEGDDDTSRMEEVD) is disordered. Residues 668 to 677 (DDTAAAVTEE) show a composition bias toward low complexity. Residues 685–694 (DDTSRMEEVD) carry the TPR repeat-binding motif. An essential for interaction with SMYD3, TSC1 and STIP1/HOP region spans residues 690–694 (MEEVD). The tract at residues 691 to 694 (EEVD) is essential for interaction with SGTA and TTC1.

Belongs to the heat shock protein 90 family. Homodimer. Identified in NR3C1/GCR steroid receptor-chaperone complexes formed at least by NR3C1, HSP90AA1 and a variety of proteins containing TPR repeats such as FKBP4, FKBP5, PPID, PPP5C or STIP1. Forms a complex containing HSP90AA1, TSC1 and TSC2; TSC1 is required to recruit TCS2 to the complex. The closed form interacts (via the middle domain and TPR repeat-binding motif) with co-chaperone TSC1 (via C-terminus). Interacts with TOM34. Interacts with TERT; the interaction, together with PTGES3, is required for correct assembly and stabilization of the TERT holoenzyme complex. Interacts with CHORDC1 and DNAJC7. Interacts with STUB1 and UBE2N; may couple the chaperone and ubiquitination systems. Interacts (via TPR repeat-binding motif) with PPP5C (via TPR repeats); the interaction is direct and activates PPP5C phosphatase activity. Following LPS binding, may form a complex with CXCR4, GDF5 and HSPA8. Interacts with KSR1. Interacts with co-chaperone CDC37 (via C-terminus); the interaction inhibits HSP90AA1 ATPase activity. May interact with NWD1. Interacts with FNIP1 and FNIP2; the interaction inhibits HSP90AA1 ATPase activity. Interacts with co-chaperone AHSA1 (phosphorylated on 'Tyr-223'); the interaction activates HSP90AA1 ATPase activity and results in the dissociation of TSC1 from HSP90AA1. Interacts with FLCN in the presence of FNIP1. Interacts with HSP70, STIP1 and PTGES3. Interacts with SMYD3; this interaction enhances SMYD3 histone-lysine N-methyltransferase. Interacts with SGTA (via TPR repeats). Interacts with TTC1 (via TPR repeats). Interacts with HSF1 in an ATP-dependent manner. Interacts with MET; the interaction suppresses MET kinase activity. Interacts with ERBB2 in an ATP-dependent manner; the interaction suppresses ERBB2 kinase activity. Interacts with HIF1A, KEAP1 and RHOBTB2. Interacts with HSF1; this interaction is decreased in a IER5-dependent manner, promoting HSF1 accumulation in the nucleus, homotrimerization and DNA-binding activities. Interacts with STUB1 and SMAD3. Interacts with HSP90AB1; interaction is constitutive. Interacts with HECTD1 (via N-terminus). Interacts with NR3C1 (via domain NR LBD) and NR1D1 (via domain NR LBD). Interacts with NLPR12. Interacts with PDCL3. Interacts with TOMM70; the interaction is required for preprotein mitochondrial import. Interacts with TOMM70, IRF3 and TBK1; the interactions are direct and mediate the association of TOMM70 with IRF3 and TBK1. Forms a complex with ASL, ASS1 and NOS2; the complex regulates cell-autonomous L-arginine synthesis and citrulline recycling while channeling extracellular L-arginine to nitric oxide synthesis pathway. In terms of processing, ISGylated. S-nitrosylated; negatively regulates the ATPase activity and the activation of eNOS by HSP90AA1. Post-translationally, ubiquitinated via 'Lys-63'-linked polyubiquitination by HECTD1. Ubiquitination promotes translocation into the cytoplasm away from the membrane and secretory pathways.

It is found in the nucleus. It localises to the cytoplasm. The protein resides in the melanosome. Its subcellular location is the cell membrane. The protein localises to the mitochondrion. The enzyme catalyses ATP + H2O = ADP + phosphate + H(+). Its activity is regulated as follows. In the resting state, through the dimerization of its C-terminal domain, HSP90 forms a homodimer which is defined as the open conformation. Upon ATP-binding, the N-terminal domain undergoes significant conformational changes and comes in contact to form an active closed conformation. After HSP90 finishes its chaperoning tasks of assisting the proper folding, stabilization and activation of client proteins under the active state, ATP molecule is hydrolyzed to ADP which then dissociates from HSP90 and directs the protein back to the resting state. Co-chaperone TSC1 promotes ATP binding and inhibits HSP90AA1 ATPase activity. Binding to phosphorylated AHSA1 promotes HSP90AA1 ATPase activity. Inhibited by geldanamycin, Ganetespib (STA-9090) and SNX-2112. Molecular chaperone that promotes the maturation, structural maintenance and proper regulation of specific target proteins involved for instance in cell cycle control and signal transduction. Undergoes a functional cycle that is linked to its ATPase activity which is essential for its chaperone activity. This cycle probably induces conformational changes in the client proteins, thereby causing their activation. Interacts dynamically with various co-chaperones that modulate its substrate recognition, ATPase cycle and chaperone function. Engages with a range of client protein classes via its interaction with various co-chaperone proteins or complexes, that act as adapters, simultaneously able to interact with the specific client and the central chaperone itself. Recruitment of ATP and co-chaperone followed by client protein forms a functional chaperone. After the completion of the chaperoning process, properly folded client protein and co-chaperone leave HSP90 in an ADP-bound partially open conformation and finally, ADP is released from HSP90 which acquires an open conformation for the next cycle. Plays a critical role in mitochondrial import, delivers preproteins to the mitochondrial import receptor TOMM70. Apart from its chaperone activity, it also plays a role in the regulation of the transcription machinery. HSP90 and its co-chaperones modulate transcription at least at three different levels. In the first place, they alter the steady-state levels of certain transcription factors in response to various physiological cues. Second, they modulate the activity of certain epigenetic modifiers, such as histone deacetylases or DNA methyl transferases, and thereby respond to the change in the environment. Third, they participate in the eviction of histones from the promoter region of certain genes and thereby turn on gene expression. Binds bacterial lipopolysaccharide (LPS) and mediates LPS-induced inflammatory response, including TNF secretion by monocytes. Antagonizes STUB1-mediated inhibition of TGF-beta signaling via inhibition of STUB1-mediated SMAD3 ubiquitination and degradation. Mediates the association of TOMM70 with IRF3 or TBK1 in mitochondrial outer membrane which promotes host antiviral response. The protein is Heat shock protein HSP 90-alpha (HSP90AA1) of Oryctolagus cuniculus (Rabbit).